A 444-amino-acid polypeptide reads, in one-letter code: UDP-N-acetylmuramate--L-alanine ligase (444 aa).

110–116 (GAHGKTS) is a binding site for ATP.

It belongs to the MurCDEF family.

It is found in the cytoplasm. The catalysed reaction is UDP-N-acetyl-alpha-D-muramate + L-alanine + ATP = UDP-N-acetyl-alpha-D-muramoyl-L-alanine + ADP + phosphate + H(+). It functions in the pathway cell wall biogenesis; peptidoglycan biosynthesis. Its function is as follows. Cell wall formation. The sequence is that of UDP-N-acetylmuramate--L-alanine ligase from Streptococcus pneumoniae (strain ATCC 700669 / Spain 23F-1).